The primary structure comprises 494 residues: Probable cytosol aminopeptidase (494 aa).

2 residues coordinate Mn(2+): K260 and D265. The active site involves K272. D283, D342, and E344 together coordinate Mn(2+). R346 is an active-site residue.

This sequence belongs to the peptidase M17 family. Requires Mn(2+) as cofactor.

The protein localises to the cytoplasm. It catalyses the reaction Release of an N-terminal amino acid, Xaa-|-Yaa-, in which Xaa is preferably Leu, but may be other amino acids including Pro although not Arg or Lys, and Yaa may be Pro. Amino acid amides and methyl esters are also readily hydrolyzed, but rates on arylamides are exceedingly low.. The catalysed reaction is Release of an N-terminal amino acid, preferentially leucine, but not glutamic or aspartic acids.. Presumably involved in the processing and regular turnover of intracellular proteins. Catalyzes the removal of unsubstituted N-terminal amino acids from various peptides. The sequence is that of Probable cytosol aminopeptidase from Bacillus thuringiensis subsp. konkukian (strain 97-27).